A 183-amino-acid polypeptide reads, in one-letter code: Acireductone dioxygenase (183 aa).

Fe(2+) contacts are provided by histidine 95, histidine 97, glutamate 101, and histidine 139. Ni(2+) contacts are provided by histidine 95, histidine 97, glutamate 101, and histidine 139.

This sequence belongs to the acireductone dioxygenase (ARD) family. As to quaternary structure, monomer. It depends on Fe(2+) as a cofactor. Requires Ni(2+) as cofactor.

It carries out the reaction 1,2-dihydroxy-5-(methylsulfanyl)pent-1-en-3-one + O2 = 3-(methylsulfanyl)propanoate + CO + formate + 2 H(+). The enzyme catalyses 1,2-dihydroxy-5-(methylsulfanyl)pent-1-en-3-one + O2 = 4-methylsulfanyl-2-oxobutanoate + formate + 2 H(+). Its pathway is amino-acid biosynthesis; L-methionine biosynthesis via salvage pathway; L-methionine from S-methyl-5-thio-alpha-D-ribose 1-phosphate: step 5/6. In terms of biological role, catalyzes 2 different reactions between oxygen and the acireductone 1,2-dihydroxy-3-keto-5-methylthiopentene (DHK-MTPene) depending upon the metal bound in the active site. Fe-containing acireductone dioxygenase (Fe-ARD) produces formate and 2-keto-4-methylthiobutyrate (KMTB), the alpha-ketoacid precursor of methionine in the methionine recycle pathway. Ni-containing acireductone dioxygenase (Ni-ARD) produces methylthiopropionate, carbon monoxide and formate, and does not lie on the methionine recycle pathway. The protein is Acireductone dioxygenase of Aquifex aeolicus (strain VF5).